Reading from the N-terminus, the 313-residue chain is GDP-D-glycero-alpha-D-manno-heptose dehydrogenase (313 aa).

NADH contacts are provided by residues 13–14 (YI), 33–39 (DNLMFDQ), phenylalanine 37, 57–58 (DA), leucine 77, and 144–148 (YGIDK). Threonine 168 contributes to the GDP binding site. NADH contacts are provided by residues valine 169 and 175-177 (RMR). Residues 179–184 (DLLVND), 196–198 (VLF), arginine 204, lysine 242, and arginine 270 each bind GDP. An NADH-binding site is contributed by asparagine 311.

Homotetramer. Requires NAD(+) as cofactor.

The catalysed reaction is GDP-D-glycero-alpha-D-manno-heptose + 2-oxoglutarate = GDP-D-glycero-4-keto-alpha-D-lyxo-heptose + (S)-2-hydroxyglutarate. It participates in capsule biogenesis; capsule polysaccharide biosynthesis. NAD-dependent dehydrogenase involved in the biosynthesis of heptose moieties with a hydroxyl group at C6 found on the capsular polysaccharide (CPS) of C.jejuni. Catalyzes the initial oxidation of C4 of the GDP-D-glycero-alpha-D-manno-heptose to form GDP-D-glycero-4-keto-alpha-D-lyxo-heptose in the presence of alpha-ketoglutarate required to recycle the NADH nucleotide. The chain is GDP-D-glycero-alpha-D-manno-heptose dehydrogenase from Campylobacter jejuni subsp. jejuni serotype O:2 (strain ATCC 700819 / NCTC 11168).